The chain runs to 375 residues: DNA replication and repair protein RecF (375 aa).

30-37 (GDNAQGKS) provides a ligand contact to ATP.

It belongs to the RecF family.

The protein localises to the cytoplasm. Functionally, the RecF protein is involved in DNA metabolism; it is required for DNA replication and normal SOS inducibility. RecF binds preferentially to single-stranded, linear DNA. It also seems to bind ATP. This Gloeobacter violaceus (strain ATCC 29082 / PCC 7421) protein is DNA replication and repair protein RecF.